A 565-amino-acid chain; its full sequence is NAD-dependent malic enzyme (565 aa).

Tyr-104 acts as the Proton donor in catalysis. Arg-157 provides a ligand contact to NAD(+). Catalysis depends on Lys-175, which acts as the Proton acceptor. Residues Glu-246, Asp-247, and Asp-270 each coordinate a divalent metal cation. 2 residues coordinate NAD(+): Asp-270 and Asn-418.

It belongs to the malic enzymes family. As to quaternary structure, homotetramer. Mg(2+) serves as cofactor. The cofactor is Mn(2+).

The catalysed reaction is (S)-malate + NAD(+) = pyruvate + CO2 + NADH. It carries out the reaction oxaloacetate + H(+) = pyruvate + CO2. The polypeptide is NAD-dependent malic enzyme (Pectobacterium carotovorum subsp. carotovorum (strain PC1)).